The chain runs to 342 residues: Protein rough sheath 2 homolog (342 aa).

HTH myb-type domains are found at residues 1 to 58 and 59 to 113; these read MQPP…KNYL and RPGI…EKQQ. 2 consecutive DNA-binding regions (H-T-H motif) follow at residues 32 to 58 and 86 to 109; these read WSLV…KNYL and WKKI…EVFK. The stretch at 253 to 304 forms a coiled coil; that stretch reads RRREATEEFEAKMRALREEQAAAVERVEAEYREKMAGLRRDAEAKEQKMAEQ.

It localises to the nucleus. Transcription factor required for normal cell differentiation. May interact with other proteins to repress the knox homeobox genes. This is Protein rough sheath 2 homolog (RS2) from Oryza sativa subsp. japonica (Rice).